The chain runs to 200 residues: Large ribosomal subunit protein uL4 (200 aa).

Positions 38–72 (GRQGTKQQKTRSDVAGGGKRPWRQKGTGRARAGTT) are disordered.

The protein belongs to the universal ribosomal protein uL4 family. As to quaternary structure, part of the 50S ribosomal subunit.

In terms of biological role, one of the primary rRNA binding proteins, this protein initially binds near the 5'-end of the 23S rRNA. It is important during the early stages of 50S assembly. It makes multiple contacts with different domains of the 23S rRNA in the assembled 50S subunit and ribosome. Its function is as follows. Forms part of the polypeptide exit tunnel. The chain is Large ribosomal subunit protein uL4 from Pseudomonas putida (strain ATCC 700007 / DSM 6899 / JCM 31910 / BCRC 17059 / LMG 24140 / F1).